Consider the following 594-residue polypeptide: UvrABC system protein C (594 aa).

One can recognise a GIY-YIG domain in the interval 14-91; sequence DQPGCYLMKD…IKKHDPKYNI (78 aa). Residues 196–231 enclose the UVR domain; the sequence is KEVRSELETKMYEASEKLEFERAKELRDQIAHIDAI.

It belongs to the UvrC family. Interacts with UvrB in an incision complex.

It localises to the cytoplasm. In terms of biological role, the UvrABC repair system catalyzes the recognition and processing of DNA lesions. UvrC both incises the 5' and 3' sides of the lesion. The N-terminal half is responsible for the 3' incision and the C-terminal half is responsible for the 5' incision. In Bacillus cereus (strain AH187), this protein is UvrABC system protein C.